The following is a 258-amino-acid chain: Imidazole glycerol phosphate synthase subunit HisF (258 aa).

Residues D11 and D130 contribute to the active site.

It belongs to the HisA/HisF family. As to quaternary structure, heterodimer of HisH and HisF.

It is found in the cytoplasm. The enzyme catalyses 5-[(5-phospho-1-deoxy-D-ribulos-1-ylimino)methylamino]-1-(5-phospho-beta-D-ribosyl)imidazole-4-carboxamide + L-glutamine = D-erythro-1-(imidazol-4-yl)glycerol 3-phosphate + 5-amino-1-(5-phospho-beta-D-ribosyl)imidazole-4-carboxamide + L-glutamate + H(+). The protein operates within amino-acid biosynthesis; L-histidine biosynthesis; L-histidine from 5-phospho-alpha-D-ribose 1-diphosphate: step 5/9. IGPS catalyzes the conversion of PRFAR and glutamine to IGP, AICAR and glutamate. The HisF subunit catalyzes the cyclization activity that produces IGP and AICAR from PRFAR using the ammonia provided by the HisH subunit. The polypeptide is Imidazole glycerol phosphate synthase subunit HisF (Buchnera aphidicola subsp. Baizongia pistaciae (strain Bp)).